The sequence spans 531 residues: Histone-arginine methyltransferase CARMER (531 aa).

Residues 141-450 (ASQYFQFYGY…QSYDVTIDLH (310 aa)) form the SAM-dependent MTase PRMT-type domain. Residues Gln-154, Arg-163, Gly-187, Glu-209, Glu-238, and Thr-266 each contribute to the S-adenosyl-L-methionine site. Arg-501 bears the Asymmetric dimethylarginine; by autocatalysis mark.

Belongs to the class I-like SAM-binding methyltransferase superfamily. Protein arginine N-methyltransferase family. Homodimer. Post-translationally, the dimethylated protein is the major form.

Its subcellular location is the cytoplasm. The protein resides in the nucleus. The catalysed reaction is L-arginyl-[protein] + 2 S-adenosyl-L-methionine = N(omega),N(omega)-dimethyl-L-arginyl-[protein] + 2 S-adenosyl-L-homocysteine + 2 H(+). Its function is as follows. Methylates (mono- and asymmetric dimethylation) the guanidino nitrogens of arginyl residues in proteins. May methylate histone H3 at 'Arg-17' and activate transcription via chromatin remodeling. In Drosophila persimilis (Fruit fly), this protein is Histone-arginine methyltransferase CARMER (Art4).